The chain runs to 83 residues: MSSGGLLLLLGLLTLWAELTPVSSKDRPDFCHLPADSGSCKGNFQAFYYHPVHRTCLEFIYGGCEGNANNFKTMDECKRTCAA.

Positions 1–24 are cleaved as a signal peptide; that stretch reads MSSGGLLLLLGLLTLWAELTPVSS. The region spanning 31–81 is the BPTI/Kunitz inhibitor domain; the sequence is CHLPADSGSCKGNFQAFYYHPVHRTCLEFIYGGCEGNANNFKTMDECKRTC. Intrachain disulfides connect cysteine 31/cysteine 81, cysteine 40/cysteine 64, and cysteine 56/cysteine 77.

This sequence belongs to the venom Kunitz-type family. As to expression, expressed by the venom gland.

It is found in the secreted. In terms of biological role, serine protease inhibitor. This chain is Kunitz-type serine protease inhibitor 161, found in Drysdalia coronoides (White-lipped snake).